The sequence spans 295 residues: Farnesyl diphosphate synthase (295 aa).

Residues K46, R49, and H78 each coordinate isopentenyl diphosphate. The Mg(2+) site is built by D85 and D91. Residue R96 participates in (2E)-geranyl diphosphate binding. An isopentenyl diphosphate-binding site is contributed by R97. Positions 180, 181, 220, and 237 each coordinate (2E)-geranyl diphosphate.

Belongs to the FPP/GGPP synthase family. Mg(2+) is required as a cofactor.

The protein localises to the cytoplasm. It catalyses the reaction isopentenyl diphosphate + (2E)-geranyl diphosphate = (2E,6E)-farnesyl diphosphate + diphosphate. The polypeptide is Farnesyl diphosphate synthase (ispA) (Haemophilus influenzae (strain ATCC 51907 / DSM 11121 / KW20 / Rd)).